The sequence spans 448 residues: Phosphoglucosamine mutase (448 aa).

Serine 100 acts as the Phosphoserine intermediate in catalysis. Mg(2+) contacts are provided by serine 100, aspartate 240, aspartate 242, and aspartate 244. At serine 100 the chain carries Phosphoserine.

This sequence belongs to the phosphohexose mutase family. It depends on Mg(2+) as a cofactor. In terms of processing, activated by phosphorylation.

It catalyses the reaction alpha-D-glucosamine 1-phosphate = D-glucosamine 6-phosphate. Catalyzes the conversion of glucosamine-6-phosphate to glucosamine-1-phosphate. This Bacillus cereus (strain G9842) protein is Phosphoglucosamine mutase.